The primary structure comprises 232 residues: Ion-translocating oxidoreductase complex subunit E (232 aa).

6 helical membrane passes run 18–38 (ALVQLLGLCPLLAVTATVTNG), 39–59 (LGLGLATTLVLIGSNATVSII), 69–89 (IPIFVMIIAAFVTVVQLLMNA), 93–113 (ELYQALGIFIPLIVTNCAIIG), 128–148 (AFDGLMMGLGFTVVLVLLGAM), and 182–202 (PFLLAILPPGAFLGMGLLIAA).

It belongs to the NqrDE/RnfAE family. The complex is composed of six subunits: RnfA, RnfB, RnfC, RnfD, RnfE and RnfG.

The protein resides in the cell inner membrane. Part of a membrane-bound complex that couples electron transfer with translocation of ions across the membrane. In Pseudoalteromonas atlantica (strain T6c / ATCC BAA-1087), this protein is Ion-translocating oxidoreductase complex subunit E.